A 288-amino-acid polypeptide reads, in one-letter code: Co-chaperone protein DjlA (288 aa).

Over 1 to 6 the chain is Periplasmic; sequence MNFIGK. Residues 7-30 form a helical membrane-spanning segment; the sequence is ILGFIIGYRFGGLFGGIAGLILGH. The Cytoplasmic portion of the chain corresponds to 31 to 288; that stretch reads IADKKLYELG…DLICKVKGWK (258 aa). The J domain occupies 222 to 288; sequence DAYKVLGVNA…DLICKVKGWK (67 aa).

Homodimer.

Its subcellular location is the cell inner membrane. In terms of biological role, regulatory DnaK co-chaperone. Direct interaction between DnaK and DjlA is needed for the induction of the wcaABCDE operon, involved in the synthesis of a colanic acid polysaccharide capsule, possibly through activation of the RcsB/RcsC phosphotransfer signaling pathway. The colanic acid capsule may help the bacterium survive conditions outside the host. This Mannheimia succiniciproducens (strain KCTC 0769BP / MBEL55E) protein is Co-chaperone protein DjlA.